A 271-amino-acid chain; its full sequence is MTYLQESSRPAVTVPKLQAMRDAGEKIAMLTCYDASFSALLDRSGVDVLLIGDSLGNVLQGHTTTLPVSLDDIAYHTACVARAQPRALIMADLPFGTYGTPAEAFASSVKLMRAGAQMVKLEGGEWLAETIRFLVERAVPVCAHVGLTPQSVHAFGGFKVQGKTEAGAAQLLRDARAVEAAGAQVVLLEAVPTLIGSEVTHMLRVPTIGIGAGADCSGQVLVLHDMLGVFPGKRPRFVKDFMQGEPNIQAAVEAYVRAVKDGSFPGPEHSF.

Mg(2+)-binding residues include Asp-53 and Asp-92. 3-methyl-2-oxobutanoate-binding positions include 53 to 54 (DS), Asp-92, and Lys-120. Glu-122 is a binding site for Mg(2+). Residue Glu-189 is the Proton acceptor of the active site.

This sequence belongs to the PanB family. As to quaternary structure, homodecamer; pentamer of dimers. Requires Mg(2+) as cofactor.

It is found in the cytoplasm. The enzyme catalyses 3-methyl-2-oxobutanoate + (6R)-5,10-methylene-5,6,7,8-tetrahydrofolate + H2O = 2-dehydropantoate + (6S)-5,6,7,8-tetrahydrofolate. It functions in the pathway cofactor biosynthesis; (R)-pantothenate biosynthesis; (R)-pantoate from 3-methyl-2-oxobutanoate: step 1/2. In terms of biological role, catalyzes the reversible reaction in which hydroxymethyl group from 5,10-methylenetetrahydrofolate is transferred onto alpha-ketoisovalerate to form ketopantoate. This Burkholderia lata (strain ATCC 17760 / DSM 23089 / LMG 22485 / NCIMB 9086 / R18194 / 383) protein is 3-methyl-2-oxobutanoate hydroxymethyltransferase 2.